We begin with the raw amino-acid sequence, 153 residues long: uncharacterized protein (153 aa).

To M.jannaschii MJ1183.

This is an uncharacterized protein from Methanothermobacter thermautotrophicus (strain ATCC 29096 / DSM 1053 / JCM 10044 / NBRC 100330 / Delta H) (Methanobacterium thermoautotrophicum).